Consider the following 264-residue polypeptide: MTDNLRLHGFNNLTSSLSFNIYDICYAKTEEQRKAYIDYIDELYNAERLTQILKDVTNIIGAHVLNISRQDYEPHGASVTILIAEHELDEHDPEHIEPGPGPLPQTVLGHLDKSHVTVHTYPESHPDNGISTFRLDIDVSTCGMISPLKALNYLIHSFDSDIVTTDYRVRGFTRDVDGRKLFIDHDITSIQDYLAEDTKRAYQMVDVNVYQENMFHTKMLLKDFDLDNYLFGSTRRDLTFEEARDIEDRLRKEMLEIFYSRNLD.

Catalysis depends on serine 114, which acts as the Schiff-base intermediate with substrate; via pyruvic acid. At serine 114 the chain carries Pyruvic acid (Ser); by autocatalysis. Catalysis depends on histidine 119, which acts as the Proton acceptor; for processing activity. Cysteine 142 acts as the Proton donor; for catalytic activity in catalysis.

Belongs to the prokaryotic AdoMetDC family. Type 2 subfamily. Heterooctamer of four alpha and four beta chains arranged as a tetramer of alpha/beta heterodimers. Requires pyruvate as cofactor. Post-translationally, is synthesized initially as an inactive proenzyme. Formation of the active enzyme involves a self-maturation process in which the active site pyruvoyl group is generated from an internal serine residue via an autocatalytic post-translational modification. Two non-identical subunits are generated from the proenzyme in this reaction, and the pyruvate is formed at the N-terminus of the alpha chain, which is derived from the carboxyl end of the proenzyme. The post-translation cleavage follows an unusual pathway, termed non-hydrolytic serinolysis, in which the side chain hydroxyl group of the serine supplies its oxygen atom to form the C-terminus of the beta chain, while the remainder of the serine residue undergoes an oxidative deamination to produce ammonia and the pyruvoyl group blocking the N-terminus of the alpha chain.

It carries out the reaction S-adenosyl-L-methionine + H(+) = S-adenosyl 3-(methylsulfanyl)propylamine + CO2. It participates in amine and polyamine biosynthesis; S-adenosylmethioninamine biosynthesis; S-adenosylmethioninamine from S-adenosyl-L-methionine: step 1/1. In terms of biological role, catalyzes the decarboxylation of S-adenosylmethionine to S-adenosylmethioninamine (dcAdoMet), the propylamine donor required for the synthesis of the polyamines spermine and spermidine from the diamine putrescine. The protein is S-adenosylmethionine decarboxylase proenzyme of Chromohalobacter salexigens (strain ATCC BAA-138 / DSM 3043 / CIP 106854 / NCIMB 13768 / 1H11).